The following is a 144-amino-acid chain: Putative pre-16S rRNA nuclease (144 aa).

It belongs to the YqgF nuclease family.

The protein localises to the cytoplasm. In terms of biological role, could be a nuclease involved in processing of the 5'-end of pre-16S rRNA. This chain is Putative pre-16S rRNA nuclease, found in Wigglesworthia glossinidia brevipalpis.